We begin with the raw amino-acid sequence, 177 residues long: Cyclic pyranopterin monophosphate synthase 3 (177 aa).

Substrate-binding positions include 79–81 (LCH) and 116–117 (ME). Asp-131 is a catalytic residue. The tract at residues 150–177 (KSGGRSGHYRRHDADVKPSDGGSTEDGC) is disordered.

The protein belongs to the MoaC family. As to quaternary structure, homohexamer; trimer of dimers.

The catalysed reaction is (8S)-3',8-cyclo-7,8-dihydroguanosine 5'-triphosphate = cyclic pyranopterin phosphate + diphosphate. It participates in cofactor biosynthesis; molybdopterin biosynthesis. Functionally, catalyzes the conversion of (8S)-3',8-cyclo-7,8-dihydroguanosine 5'-triphosphate to cyclic pyranopterin monophosphate (cPMP). The protein is Cyclic pyranopterin monophosphate synthase 3 (moaC3) of Mycobacterium bovis (strain ATCC BAA-935 / AF2122/97).